Here is a 1325-residue protein sequence, read N- to C-terminus: Protein PHYTOCHROME-DEPENDENT LATE-FLOWERING (1325 aa).

Polar residues-rich tracts occupy residues 313 to 331 (IGST…SVSG) and 504 to 515 (NFPQTSWNVNPG). Disordered stretches follow at residues 313–371 (IGST…MPGL), 462–558 (EPFE…EFSG), 593–616 (ANEA…NSLP), 852–875 (VAGQ…NSTQ), and 1160–1325 (QQQQ…GNNS). Basic and acidic residues predominate over residues 518 to 529 (IEKEPKKEEQFS). Over residues 596–607 (AMQQRQHQAQMA) the composition is skewed to low complexity. Residues 863 to 875 (HGNTGNTPNNSTQ) are compositionally biased toward polar residues. Over residues 1160-1224 (QQQQQQQLQQ…QQQATASPLQ (65 aa)) the composition is skewed to low complexity. Residues 1225–1239 (SVLSPPQVGSPSAGI) show a composition bias toward polar residues. Residues 1240 to 1262 (TQQQLQQSSPQQMSQRTPMSPQQ) are compositionally biased toward low complexity. Composition is skewed to polar residues over residues 1263-1286 (VNQR…TSNL) and 1293-1325 (PQLS…GNNS).

As to quaternary structure, component of a red light-dependent nuclear complex made of PHL, PHYB and CO. Interacts directly with PHYB and CO; CO binding requires the presence of PHYB. In terms of tissue distribution, mostly expressed in cotyledons and leaves, both in mesophyll and vasculature cells. Also present in roots, hypocotyls and shoot apices.

The protein localises to the nucleus. The protein resides in the nuclear body. Its subcellular location is the cytoplasmic granule. It localises to the cytoplasm. Functionally, triggers photoperiod-monitored flowering by repressing PHYB-dependent flowering negative regulation, probably through physical interactions with PHYB and CO. This is Protein PHYTOCHROME-DEPENDENT LATE-FLOWERING from Arabidopsis thaliana (Mouse-ear cress).